Consider the following 222-residue polypeptide: Glutathione S-transferase A6 (222 aa).

The GST N-terminal domain maps to 3 to 83 (EKPLFHYDEA…YFSSKYNLYG (81 aa)). Glutathione contacts are provided by residues Tyr9, Arg45, 54–55 (QV), and 67–68 (QT). A GST C-terminal domain is found at 85 to 208 (DMKERALIDM…QPGSQRQPPV (124 aa)).

The protein belongs to the GST superfamily. Alpha family. In terms of assembly, homodimer or heterodimer of GSTA1 and GSTA2.

Its subcellular location is the cytoplasm. The enzyme catalyses RX + glutathione = an S-substituted glutathione + a halide anion + H(+). Its function is as follows. Conjugation of reduced glutathione to a wide number of exogenous and endogenous hydrophobic electrophiles. This chain is Glutathione S-transferase A6 (Gsta6), found in Rattus norvegicus (Rat).